The primary structure comprises 463 residues: O-acetyltransferase SAT5 (463 aa).

It belongs to the trichothecene 3-O-acetyltransferase family.

The protein operates within mycotoxin biosynthesis. O-acetyltransferase; part of the satratoxin SC1 cluster involved in the biosynthesis of satratoxins, trichothecene mycotoxins that are associated with human food poisonings. Satratoxins are suggested to be made by products of multiple gene clusters (SC1, SC2 and SC3) that encode 21 proteins in all, including polyketide synthases, acetyltransferases, and other enzymes expected to modify the trichothecene skeleton. SC1 encodes 10 proteins, SAT1 to SAT10. The largest are SAT8, which encodes a putative polyketide synthase (PKS) with a conventional non-reducing architecture, and SAT10, a putative protein containing four ankyrin repeats and thus may be involved in protein scaffolding. The putative short-chain reductase SAT3 may assist the PKS in some capacity. SAT6 contains a secretory lipase domain and acts probably as a trichothecene esterase. SAT5 encodes a putative acetyltransferase, and so, with SAT6, may affect endogenous protection from toxicity. The probable transcription factor SAT9 may regulate the expression of the SC1 cluster. SC2 encodes proteins SAT11 to SAT16, the largest of which encodes the putative reducing PKS SAT13. SAT11 is a cytochrome P450 monooxygenase, while SAT14 and SAT16 are probable acetyltransferases. The SC2 cluster may be regulated by the transcription factor SAT15. SC3 is a small cluster that encodes 5 proteins, SAT17 to SAT21. SAT21 is a putative MFS-type transporter which may have a role in exporting secondary metabolites. The four other proteins putatively encoded in SC3 include the taurine hydroxylase-like protein SAT17, the O-methyltransferase SAT18, the acetyltransferase SAT19, and the Cys6-type zinc finger SAT20, the latter being probably involved in regulation of SC3 expression. This chain is O-acetyltransferase SAT5, found in Stachybotrys chartarum (strain CBS 109288 / IBT 7711) (Toxic black mold).